Consider the following 194-residue polypeptide: 7-methyl-GTP pyrophosphatase (194 aa).

The Proton acceptor role is filled by Asp-69.

Belongs to the Maf family. YceF subfamily. A divalent metal cation is required as a cofactor.

The protein localises to the cytoplasm. The catalysed reaction is N(7)-methyl-GTP + H2O = N(7)-methyl-GMP + diphosphate + H(+). Its function is as follows. Nucleoside triphosphate pyrophosphatase that hydrolyzes 7-methyl-GTP (m(7)GTP). May have a dual role in cell division arrest and in preventing the incorporation of modified nucleotides into cellular nucleic acids. This is 7-methyl-GTP pyrophosphatase (yceF1) from Salmonella choleraesuis (strain SC-B67).